Reading from the N-terminus, the 282-residue chain is ATP phosphoribosyltransferase (282 aa).

It belongs to the ATP phosphoribosyltransferase family. Long subfamily. Mg(2+) is required as a cofactor.

It localises to the cytoplasm. It catalyses the reaction 1-(5-phospho-beta-D-ribosyl)-ATP + diphosphate = 5-phospho-alpha-D-ribose 1-diphosphate + ATP. It participates in amino-acid biosynthesis; L-histidine biosynthesis; L-histidine from 5-phospho-alpha-D-ribose 1-diphosphate: step 1/9. With respect to regulation, feedback inhibited by histidine. Catalyzes the condensation of ATP and 5-phosphoribose 1-diphosphate to form N'-(5'-phosphoribosyl)-ATP (PR-ATP). Has a crucial role in the pathway because the rate of histidine biosynthesis seems to be controlled primarily by regulation of HisG enzymatic activity. This Pyrobaculum calidifontis (strain DSM 21063 / JCM 11548 / VA1) protein is ATP phosphoribosyltransferase.